A 435-amino-acid polypeptide reads, in one-letter code: Tol-Pal system protein TolB (435 aa).

The N-terminal stretch at 1-20 (MRKIIAGVFIFVFLISNLYA) is a signal peptide.

This sequence belongs to the TolB family. The Tol-Pal system is composed of five core proteins: the inner membrane proteins TolA, TolQ and TolR, the periplasmic protein TolB and the outer membrane protein Pal. They form a network linking the inner and outer membranes and the peptidoglycan layer.

The protein resides in the periplasm. Part of the Tol-Pal system, which plays a role in outer membrane invagination during cell division and is important for maintaining outer membrane integrity. This chain is Tol-Pal system protein TolB, found in Francisella tularensis subsp. mediasiatica (strain FSC147).